We begin with the raw amino-acid sequence, 186 residues long: TATA-box-binding protein 2 (186 aa).

Repeat copies occupy residues 10-86 (IQNV…FDKL) and 101-179 (VQNI…VERI). Glycyl lysine isopeptide (Lys-Gly) (interchain with G-Cter in SAMP2) cross-links involve residues lysine 53 and lysine 63.

This sequence belongs to the TBP family.

In terms of biological role, general factor that plays a role in the activation of archaeal genes transcribed by RNA polymerase. Binds specifically to the TATA box promoter element which lies close to the position of transcription initiation. The sequence is that of TATA-box-binding protein 2 (tbp2) from Haloferax volcanii (strain ATCC 29605 / DSM 3757 / JCM 8879 / NBRC 14742 / NCIMB 2012 / VKM B-1768 / DS2) (Halobacterium volcanii).